The following is a 372-amino-acid chain: Cytochrome b (372 aa).

4 helical membrane passes run 25–45 (FGSM…FLAL), 69–90 (WIMQ…YIHI), 105–125 (WLSG…GYVL), and 170–190 (FFAL…IHII). Heme b contacts are provided by histidine 75 and histidine 89. Heme b-binding residues include histidine 174 and histidine 188. Histidine 193 is a binding site for a ubiquinone. 4 helical membrane passes run 218–238 (YKDM…LSFA), 280–300 (LGGT…PFTH), 312–332 (LSQI…WTAS), and 339–358 (FITI…ITTP).

Belongs to the cytochrome b family. The cytochrome bc1 complex contains 3 respiratory subunits (MT-CYB, CYC1 and UQCRFS1), 2 core proteins (UQCRC1 and UQCRC2) and probably 6 low-molecular weight proteins. Heme b is required as a cofactor.

It is found in the mitochondrion inner membrane. Component of the ubiquinol-cytochrome c reductase complex (complex III or cytochrome b-c1 complex) that is part of the mitochondrial respiratory chain. The b-c1 complex mediates electron transfer from ubiquinol to cytochrome c. Contributes to the generation of a proton gradient across the mitochondrial membrane that is then used for ATP synthesis. The sequence is that of Cytochrome b (MT-CYB) from Naja nivea (Cape cobra).